The sequence spans 147 residues: Protein archease (147 aa).

Aspartate 17, aspartate 146, and isoleucine 147 together coordinate Ca(2+).

It belongs to the archease family.

Activates the tRNA-splicing ligase complex by facilitating the enzymatic turnover of catalytic subunit RtcB. Acts by promoting the guanylylation of RtcB, a key intermediate step in tRNA ligation. Can also alter the NTP specificity of RtcB such that ATP, dGTP or ITP is used efficiently. The sequence is that of Protein archease from Pyrobaculum calidifontis (strain DSM 21063 / JCM 11548 / VA1).